The primary structure comprises 375 residues: uncharacterized protein (375 aa).

Residues 1–2 (MR) lie on the Cytoplasmic side of the membrane. The chain crosses the membrane as a helical; Signal-anchor for type II membrane protein span at residues 3–23 (WYSYVIPAVILSIIAISGVWW). At 24 to 375 (NATLGTRLDQ…YIEQRLFPQP (352 aa)) the chain is on the lumenal side.

The protein belongs to the glycosyltransferase 34 family.

The protein localises to the endoplasmic reticulum membrane. The protein resides in the golgi apparatus membrane. This is an uncharacterized protein from Schizosaccharomyces pombe (strain 972 / ATCC 24843) (Fission yeast).